The chain runs to 335 residues: MPTPLALLLSAILIIGTYFAMPFWPFRKSNYDPRGKHCYITGGSSGLGKALAERLVKQGAHVTIVGRDSKKAEGVVEELKAIAAPGQIIQCIAADLTSPIASTNAIHAACKPHADQAPDYVYLCAGFSRPKLFVETTKQELKDGLDGVYWVSAYTAHEACQMMSKQRRTGKIIFVASFLSYVSFAGYSSYSPAKYALRGLSDALRSEMLLHNIDIHIFLPCGISGPGFDAENRTKPAVTKKIEEGDTPITPEVCAAALESGLKKGYYQITDNLVTEPIRLRSNGGVPTNNFLLDTLWLIVSSVGVPIWRMTADSAVRSFRAKVEKELEAKGYYVS.

Residues Gly42, Ser44, Ser45, and Gly46 each contribute to the NADPH site. A GXSXG motif is present at residues 42–46 (GGSSG). Leu47 serves as a coordination point for NADP(+). The NADPH site is built by Arg67, Asp68, Lys71, Asp95, and Leu96. Residue Asp95 participates in NADP(+) binding. The NADP(+) site is built by Tyr190, Lys194, and Ile223. Tyr190 (proton acceptor) is an active-site residue. Lys194 functions as the Lowers pKa of active site Tyr in the catalytic mechanism. Residues 288–308 (TNNFLLDTLWLIVSSVGVPIW) traverse the membrane as a helical segment.

This sequence belongs to the short-chain dehydrogenases/reductases (SDR) family.

Its subcellular location is the endoplasmic reticulum membrane. It carries out the reaction sphinganine + NADP(+) = 3-oxosphinganine + NADPH + H(+). It participates in lipid metabolism; sphingolipid metabolism. Functionally, catalyzes the reduction of 3'-oxosphinganine (3-ketodihydrosphingosine/KDS) to sphinganine (dihydrosphingosine/DHS), the second step of de novo sphingolipid biosynthesis. This is 3-ketodihydrosphingosine reductase TSC10 (TSC10) from Cryptococcus neoformans var. neoformans serotype D (strain B-3501A) (Filobasidiella neoformans).